A 75-amino-acid chain; its full sequence is Protein SlyX homolog (75 aa).

This sequence belongs to the SlyX family.

The chain is Protein SlyX homolog from Vibrio atlanticus (strain LGP32) (Vibrio splendidus (strain Mel32)).